The chain runs to 81 residues: MKYPLVPLVNELTFSFLVFWLCLPVALLLFLLIIWLRFLLSQDSEENDSDVCLDWEPWSKNPDEFCQEEMLHSQEEERPCC.

A helical membrane pass occupies residues 16–36 (FLVFWLCLPVALLLFLLIIWL).

This sequence belongs to the adipogenin family. Highly expressed in subcutaneous, perirenal and mesecentric adipose tissue.

It is found in the membrane. The protein resides in the nucleus. In terms of biological role, plays a role in stimulating adipocyte differentiation and development. This is Adipogenin from Bos taurus (Bovine).